We begin with the raw amino-acid sequence, 299 residues long: Non-structural protein NS-S (299 aa).

The segment at 66-69 is involved in inclusion bodies formation; sequence PNNP. The interval 148-220 is interaction with host TNIP2; it reads FEGDMVIDSC…KPLLDSLYFA (73 aa).

This sequence belongs to the Bandavirus NS-S protein family. In terms of assembly, interacts with host TBK1; this interaction antagonizes TBK1 phosphorylation and inhibits TBK1-IRF3 interaction. Interacts with host STAT2; this interaction blocks the nuclear translocation and activation of host STAT2. Interacts with host TNIP2.

It localises to the host cytoplasm. In terms of biological role, plays a role in the inhibition of host RLR-induced interferon-beta activation by inhibiting the phosphorylation of TANK-binding kinase 1/TBK1, thereby blocking IRF3 activation and preventing the establishment of an antiviral state. Also blocks IFN-triggered nuclear translocation and activation of host STAT2. This is Non-structural protein NS-S (NSS) from Alces americanus (American moose).